Here is a 218-residue protein sequence, read N- to C-terminus: LHFPL tetraspan subfamily member 3 protein (218 aa).

4 helical membrane passes run 22–42 (IGVL…VCFI), 96–116 (FFIG…GLFF), 126–146 (ICAW…MIFP), and 177–197 (ILAI…FVLG).

The protein belongs to the LHFP family.

Its subcellular location is the membrane. In Xenopus laevis (African clawed frog), this protein is LHFPL tetraspan subfamily member 3 protein.